Consider the following 90-residue polypeptide: MKNYKIIVFGTVQGVGFRYTTKAIADNMGIKGIVRNQSDGTVYIEAQGNSLLLSQFISSIKAPKNPFAKVTKIDVSEIPVKTYNDFSVTY.

The Acylphosphatase-like domain maps to 3-90 (NYKIIVFGTV…KTYNDFSVTY (88 aa)). Active-site residues include R18 and N36.

Belongs to the acylphosphatase family.

The enzyme catalyses an acyl phosphate + H2O = a carboxylate + phosphate + H(+). This Ligilactobacillus salivarius (strain UCC118) (Lactobacillus salivarius) protein is Acylphosphatase (acyP).